The chain runs to 264 residues: S-adenosylmethionine decarboxylase proenzyme (264 aa).

Ser-112 (schiff-base intermediate with substrate; via pyruvic acid) is an active-site residue. Ser-112 bears the Pyruvic acid (Ser); by autocatalysis mark. Residue His-117 is the Proton acceptor; for processing activity of the active site. The active-site Proton donor; for catalytic activity is Cys-140.

The protein belongs to the prokaryotic AdoMetDC family. Type 2 subfamily. As to quaternary structure, heterooctamer of four alpha and four beta chains arranged as a tetramer of alpha/beta heterodimers. It depends on pyruvate as a cofactor. In terms of processing, is synthesized initially as an inactive proenzyme. Formation of the active enzyme involves a self-maturation process in which the active site pyruvoyl group is generated from an internal serine residue via an autocatalytic post-translational modification. Two non-identical subunits are generated from the proenzyme in this reaction, and the pyruvate is formed at the N-terminus of the alpha chain, which is derived from the carboxyl end of the proenzyme. The post-translation cleavage follows an unusual pathway, termed non-hydrolytic serinolysis, in which the side chain hydroxyl group of the serine supplies its oxygen atom to form the C-terminus of the beta chain, while the remainder of the serine residue undergoes an oxidative deamination to produce ammonia and the pyruvoyl group blocking the N-terminus of the alpha chain.

It carries out the reaction S-adenosyl-L-methionine + H(+) = S-adenosyl 3-(methylsulfanyl)propylamine + CO2. Its pathway is amine and polyamine biosynthesis; S-adenosylmethioninamine biosynthesis; S-adenosylmethioninamine from S-adenosyl-L-methionine: step 1/1. Catalyzes the decarboxylation of S-adenosylmethionine to S-adenosylmethioninamine (dcAdoMet), the propylamine donor required for the synthesis of the polyamines spermine and spermidine from the diamine putrescine. In Yersinia enterocolitica serotype O:8 / biotype 1B (strain NCTC 13174 / 8081), this protein is S-adenosylmethionine decarboxylase proenzyme.